A 264-amino-acid polypeptide reads, in one-letter code: 3-methyl-2-oxobutanoate hydroxymethyltransferase (264 aa).

The Mg(2+) site is built by D45 and D84. Residues 45 to 46, D84, and K113 contribute to the 3-methyl-2-oxobutanoate site; that span reads DS. E115 provides a ligand contact to Mg(2+). E182 serves as the catalytic Proton acceptor.

Belongs to the PanB family. In terms of assembly, homodecamer; pentamer of dimers. The cofactor is Mg(2+).

Its subcellular location is the cytoplasm. It carries out the reaction 3-methyl-2-oxobutanoate + (6R)-5,10-methylene-5,6,7,8-tetrahydrofolate + H2O = 2-dehydropantoate + (6S)-5,6,7,8-tetrahydrofolate. Its pathway is cofactor biosynthesis; (R)-pantothenate biosynthesis; (R)-pantoate from 3-methyl-2-oxobutanoate: step 1/2. Functionally, catalyzes the reversible reaction in which hydroxymethyl group from 5,10-methylenetetrahydrofolate is transferred onto alpha-ketoisovalerate to form ketopantoate. This is 3-methyl-2-oxobutanoate hydroxymethyltransferase from Caldicellulosiruptor saccharolyticus (strain ATCC 43494 / DSM 8903 / Tp8T 6331).